A 92-amino-acid chain; its full sequence is Putative pterin-4-alpha-carbinolamine dehydratase (92 aa).

The protein belongs to the pterin-4-alpha-carbinolamine dehydratase family.

It carries out the reaction (4aS,6R)-4a-hydroxy-L-erythro-5,6,7,8-tetrahydrobiopterin = (6R)-L-erythro-6,7-dihydrobiopterin + H2O. This Natronomonas pharaonis (strain ATCC 35678 / DSM 2160 / CIP 103997 / JCM 8858 / NBRC 14720 / NCIMB 2260 / Gabara) (Halobacterium pharaonis) protein is Putative pterin-4-alpha-carbinolamine dehydratase.